We begin with the raw amino-acid sequence, 65 residues long: Neurotoxin BmK-M3 (65 aa).

Residues 2–64 (RDAYIAKPEN…VPIRVWGKCH (63 aa)) form the LCN-type CS-alpha/beta domain. 4 cysteine pairs are disulfide-bonded: C12-C63, C16-C36, C22-C46, and C26-C48.

This sequence belongs to the long (4 C-C) scorpion toxin superfamily. Sodium channel inhibitor family. Alpha subfamily. As to expression, expressed by the venom gland.

It localises to the secreted. In terms of biological role, binds to sodium channels (Nav) and inhibits the inactivation of the activated channels, thereby blocking neuronal transmission. The protein is Neurotoxin BmK-M3 of Olivierus martensii (Manchurian scorpion).